We begin with the raw amino-acid sequence, 37 residues long: Large ribosomal subunit protein bL36 (37 aa).

The protein belongs to the bacterial ribosomal protein bL36 family.

The chain is Large ribosomal subunit protein bL36 from Maridesulfovibrio salexigens (strain ATCC 14822 / DSM 2638 / NCIMB 8403 / VKM B-1763) (Desulfovibrio salexigens).